Here is a 1287-residue protein sequence, read N- to C-terminus: DNA-directed RNA polymerase 147 kDa polypeptide (1287 aa).

It belongs to the poxviridae DNA-directed RNA polymerase 147 kDa subunit family. In terms of assembly, the DNA-dependent RNA polymerase used for intermediate and late genes expression consists of eight subunits Rpo30/OPG66, Rpo7/OPG90, Rpo22/OPG103, Rpo147/OPG105, Rpo18/OPG119, Rpo19/OPG131, Rpo132/OPG151 and Rpo35/OPG156. The same holoenzyme, with the addition of the transcription-specificity factor OPG109, is used for early gene expression.

Its subcellular location is the virion. The enzyme catalyses RNA(n) + a ribonucleoside 5'-triphosphate = RNA(n+1) + diphosphate. Part of the DNA-dependent RNA polymerase which catalyzes the transcription of viral DNA into RNA using the four ribonucleoside triphosphates as substrates. Responsible for the transcription of early, intermediate and late genes. DNA-dependent RNA polymerase associates with the early transcription factor (ETF), itself composed of OPG118 and OPG133, thereby allowing the early genes transcription. Late transcription, and probably also intermediate transcription, require newly synthesized RNA polymerase. The protein is DNA-directed RNA polymerase 147 kDa polypeptide (OPG105) of Fowlpox virus (strain NVSL) (FPV).